A 61-amino-acid chain; its full sequence is Metallothionein-1B (61 aa).

Residues 1–29 (MDPNCSCTTGGSCACAGSCKCKECKCTSC) are beta. Positions 5, 7, 13, 15, 19, 21, 24, 26, 29, 33, 34, 36, 37, 41, 44, 48, 50, 57, 59, and 60 each coordinate a divalent metal cation. Residues 30–61 (KKCCCSCCPVGCAKCAQGCVCKGSSEKCRCCA) form an alpha region.

The protein belongs to the metallothionein superfamily. Type 1 family. As to quaternary structure, monomer.

Its function is as follows. Metallothioneins have a high content of cysteine residues that bind various heavy metals; these proteins are transcriptionally regulated by both heavy metals and glucocorticoids. This chain is Metallothionein-1B (MT1B), found in Homo sapiens (Human).